The following is a 470-amino-acid chain: MNSVAENFTDYVVADLALAGWGRKEIRIAETEMPGLMAIREEFAVVQPLKGARITGSLHMTIQTAVLIETLTALGAEVRWASCNIFSTQDHAAAAIAASGVPVFAVKGESLADYWDYTHRIFEWRDGGYSNMILDDGGDATLLLHLGARAEKDVSVLAKPGSEEERVLFAAIRAKLASDPTWYSVRLAAIRGVTEETTTGVHRLYQMFERGELKFPAINVNDSVTKSKFDNLYGCRESLVDGIKRATDVMVAGKVAVVCGYGDVGKGSAQALRALSAQVWVTEIDPICALQAAMEGYRVVTMDYAAEHADIFVTCTGNYHVIRHDHMARMKDQAIVCNIGHFDNEIDVASIEGYEWEEIKPQVDHVIFPDGKRIILLAKGRLVNLGCATGHPSYVMSSSFANQTIAQIELFTRTADYPVGVYTLPKHLDEKVARLQLKKLNAQLTELRPDQAAYIGVPVEGPYKSAHYRY.

Residues threonine 61, aspartate 136, and glutamate 196 each contribute to the substrate site. Residue 197-199 (TTT) participates in NAD(+) binding. Substrate-binding residues include lysine 226 and aspartate 230. NAD(+)-binding positions include asparagine 231, 260–265 (GYGDVG), glutamate 283, asparagine 318, 339–341 (IGH), and asparagine 384.

The protein belongs to the adenosylhomocysteinase family. It depends on NAD(+) as a cofactor.

It is found in the cytoplasm. It carries out the reaction S-adenosyl-L-homocysteine + H2O = L-homocysteine + adenosine. It functions in the pathway amino-acid biosynthesis; L-homocysteine biosynthesis; L-homocysteine from S-adenosyl-L-homocysteine: step 1/1. Its function is as follows. May play a key role in the regulation of the intracellular concentration of adenosylhomocysteine. The polypeptide is Adenosylhomocysteinase (Aromatoleum aromaticum (strain DSM 19018 / LMG 30748 / EbN1) (Azoarcus sp. (strain EbN1))).